We begin with the raw amino-acid sequence, 498 residues long: Glycerol kinase (498 aa).

T12 provides a ligand contact to ADP. ATP-binding residues include T12, T13, and S14. T12 contributes to the sn-glycerol 3-phosphate binding site. R16 is a binding site for ADP. Sn-glycerol 3-phosphate is bound by residues R82, E83, Y134, and D243. 5 residues coordinate glycerol: R82, E83, Y134, D243, and Q244. T265 and G308 together coordinate ADP. The ATP site is built by T265, G308, Q312, and G409. Residues G409 and N413 each contribute to the ADP site.

Belongs to the FGGY kinase family. Homotetramer and homodimer (in equilibrium).

It catalyses the reaction glycerol + ATP = sn-glycerol 3-phosphate + ADP + H(+). It functions in the pathway polyol metabolism; glycerol degradation via glycerol kinase pathway; sn-glycerol 3-phosphate from glycerol: step 1/1. Activated by phosphorylation and inhibited by fructose 1,6-bisphosphate (FBP). Its function is as follows. Key enzyme in the regulation of glycerol uptake and metabolism. Catalyzes the phosphorylation of glycerol to yield sn-glycerol 3-phosphate. This is Glycerol kinase from Clostridium botulinum (strain 657 / Type Ba4).